The primary structure comprises 743 residues: Tegument protein UL46 homolog (743 aa).

Disordered stretches follow at residues 437–481 (GCPP…VSSA), 522–590 (HQRS…SGYM), and 693–743 (RVRL…VSSL). A compositionally biased stretch (low complexity) spans 526 to 552 (DSSSSDNSSCSSTETEYITISSTPSPT). Polar residues-rich tracts occupy residues 573–586 (QPAN…SPAN) and 697–716 (GTTT…TPSS). Residues 722-743 (RTLSTSESPESSPEQQERVSSL) show a composition bias toward low complexity.

Belongs to the herpesviridae HHV-1 VP11/12 protein family. Interacts with VP16.

It localises to the virion tegument. It is found in the host cell membrane. In terms of biological role, abundant tegument protein. Trans-activates the immediate early genes. The chain is Tegument protein UL46 homolog from Equus caballus (Horse).